Here is a 369-residue protein sequence, read N- to C-terminus: Ribonuclease D (369 aa).

In terms of domain architecture, 3'-5' exonuclease spans 4 to 168; the sequence is EIITTTAQLH…CLEKLQQQLE (165 aa). An HRDC domain is found at 207–286; the sequence is DRQGLAIIKA…TQVISQDEST (80 aa).

Belongs to the RNase D family. The cofactor is a divalent metal cation.

The protein resides in the cytoplasm. The catalysed reaction is Exonucleolytic cleavage that removes extra residues from the 3'-terminus of tRNA to produce 5'-mononucleotides.. Its function is as follows. Exonuclease involved in the 3' processing of various precursor tRNAs. Initiates hydrolysis at the 3'-terminus of an RNA molecule and releases 5'-mononucleotides. This chain is Ribonuclease D, found in Psychromonas ingrahamii (strain DSM 17664 / CCUG 51855 / 37).